Consider the following 495-residue polypeptide: Cytochrome P450 monooxygenase 113 (495 aa).

Residues 2-22 (FLQIAACFTVIGLLYGLVSNL) form a helical membrane-spanning segment. A heme-binding site is contributed by cysteine 428.

The protein belongs to the cytochrome P450 family. It depends on heme as a cofactor.

The protein localises to the membrane. Its pathway is secondary metabolite biosynthesis. Its function is as follows. Cytochrome P450 monooxygenase that is able to use 4-ethoxybenzoic acid as a substrate for oxidation. This chain is Cytochrome P450 monooxygenase 113, found in Postia placenta (strain ATCC 44394 / Madison 698-R) (Brown rot fungus).